The primary structure comprises 130 residues: MPRPASESWSPIQSRIPAYKAVSHLRLLPTANSPSGSNQPTNPNRAQHPEGPQSREGATSPVLASLEPPTPTDLPSARARPRVPAESGPGWLHKARRPTRGILRDVLRHRGVPAQPRPAPGAHQLSSPSS.

The interval 23–130 (SHLRLLPTAN…GAHQLSSPSS (108 aa)) is disordered. Polar residues predominate over residues 30-45 (TANSPSGSNQPTNPNR).

This is an uncharacterized protein from Homo sapiens (Human).